The primary structure comprises 404 residues: MTYKIMAINAGSSSLKFQLLNMPQGALLCQGLIERIGLPEARFMLKTSAQKWQETLPIADHHEAVTLLLEALTGRGILSSLQEIDGVGHRVAHGGERFKDAALVCDDTLREIERLAELAPLHNPVNALGIRLFRQRLPAVPAVAVFDTAFHQTLAPEAWLYPLPWRYYAELGIRRYGFHGTSHHYVSSALAEKLGVPLSALRVVSCHLGNGCSVCAIKGGQSVNTSMGFTPQSGVMMGTRSGDIDPSILPWLVEKEGKSALQLSQLLNNESGLLGVSGVSSDYRDVEQAADAGNERAALALSLFAERIRATIGSYIMQMGGLDALIFTGGIGEHSARARATICRNLHFLGLALDDEKNQRSATFIQADNALVKVAVINTNEELMIARDVMRLALPQARELTVSA.

This sequence belongs to the acetokinase family. PduW subfamily.

It localises to the cytoplasm. It catalyses the reaction propanoate + ATP = propanoyl phosphate + ADP. Its pathway is polyol metabolism; 1,2-propanediol degradation. Functionally, works with phosphate acetyltransferase (pta) to capture exogenous propionate and regenerate propionyl-CoA during degradation of 1,2-propanediol (1,2-PD). This is Propionate kinase from Klebsiella pneumoniae (strain 342).